The sequence spans 147 residues: 3-dehydroquinate dehydratase (147 aa).

Tyr24 serves as the catalytic Proton acceptor. The substrate site is built by Asn75, His81, and Asp88. The active-site Proton donor is the His101. Substrate-binding positions include 102–103 (IS) and Arg112.

Belongs to the type-II 3-dehydroquinase family. Homododecamer.

The catalysed reaction is 3-dehydroquinate = 3-dehydroshikimate + H2O. The protein operates within metabolic intermediate biosynthesis; chorismate biosynthesis; chorismate from D-erythrose 4-phosphate and phosphoenolpyruvate: step 3/7. Its function is as follows. Catalyzes a trans-dehydration via an enolate intermediate. The chain is 3-dehydroquinate dehydratase from Cereibacter sphaeroides (strain ATCC 17029 / ATH 2.4.9) (Rhodobacter sphaeroides).